A 450-amino-acid polypeptide reads, in one-letter code: Tubulin alpha chain (450 aa).

An MREC motif motif is present at residues 1 to 4 (MREC). Glutamine 11 contributes to the GTP binding site. At lysine 40 the chain carries N6-acetyllysine. Residues glutamate 71, serine 140, glycine 144, threonine 145, threonine 179, asparagine 206, and asparagine 228 each contribute to the GTP site. Glutamate 71 serves as a coordination point for Mg(2+). Glutamate 254 is a catalytic residue. At glutamate 444 the chain carries 5-glutamyl polyglutamate.

It belongs to the tubulin family. In terms of assembly, dimer of alpha and beta chains. A typical microtubule is a hollow water-filled tube with an outer diameter of 25 nm and an inner diameter of 15 nM. Alpha-beta heterodimers associate head-to-tail to form protofilaments running lengthwise along the microtubule wall with the beta-tubulin subunit facing the microtubule plus end conferring a structural polarity. Microtubules usually have 13 protofilaments but different protofilament numbers can be found in some organisms and specialized cells. Mg(2+) is required as a cofactor. Post-translationally, some glutamate residues at the C-terminus are polyglycylated, resulting in polyglycine chains on the gamma-carboxyl group. Glycylation is mainly limited to tubulin incorporated into axonemes (cilia and flagella) whereas glutamylation is prevalent in neuronal cells, centrioles, axonemes, and the mitotic spindle. Both modifications can coexist on the same protein on adjacent residues, and lowering polyglycylation levels increases polyglutamylation, and reciprocally. The precise function of polyglycylation is still unclear. Some glutamate residues at the C-terminus are polyglutamylated, resulting in polyglutamate chains on the gamma-carboxyl group. Polyglutamylation plays a key role in microtubule severing by spastin (SPAST). SPAST preferentially recognizes and acts on microtubules decorated with short polyglutamate tails: severing activity by SPAST increases as the number of glutamates per tubulin rises from one to eight, but decreases beyond this glutamylation threshold. In terms of processing, acetylation of alpha chains at Lys-40 is located inside the microtubule lumen. This modification has been correlated with increased microtubule stability, intracellular transport and ciliary assembly. Post-translationally, undergoes a tyrosination/detyrosination cycle, the cyclic removal and re-addition of a C-terminal tyrosine residue by the enzymes tubulin tyrosine carboxypeptidase (MATCAP, VASH1 or VASH2) and tubulin tyrosine ligase (TTL), respectively. Tyrosination promotes microtubule interaction with CAP-Gly microtubule plus-end tracking proteins. Tyrosinated tubulins regulate the initiation of dynein-driven motility. In terms of processing, detyrosination is involved in metaphase plate congression by guiding chromosomes during mitosis. Detyrosination increases microtubules-dependent mechanotransduction in dystrophic cardiac and skeletal muscle. In cardiomyocytes, detyrosinated microtubules are required to resist to contractile compression during contraction.

The protein resides in the cytoplasm. The protein localises to the cytoskeleton. It catalyses the reaction GTP + H2O = GDP + phosphate + H(+). In terms of biological role, tubulin is the major constituent of microtubules, a cylinder consisting of laterally associated linear protofilaments composed of alpha- and beta-tubulin heterodimers. Microtubules grow by the addition of GTP-tubulin dimers to the microtubule end, where a stabilizing cap forms. Below the cap, tubulin dimers are in GDP-bound state, owing to GTPase activity of alpha-tubulin. The protein is Tubulin alpha chain of Notophthalmus viridescens (Eastern newt).